The primary structure comprises 389 residues: Succinate--CoA ligase [ADP-forming] subunit beta (389 aa).

The region spanning 9–244 (KEILRKFGVA…LDEEDPAEVE (236 aa)) is the ATP-grasp domain. ATP-binding positions include lysine 46, 53 to 55 (GRG), glutamate 99, alanine 102, and glutamate 107. Positions 199 and 213 each coordinate Mg(2+). Substrate contacts are provided by residues asparagine 264 and 321-323 (GIM).

This sequence belongs to the succinate/malate CoA ligase beta subunit family. In terms of assembly, heterotetramer of two alpha and two beta subunits. The cofactor is Mg(2+).

It carries out the reaction succinate + ATP + CoA = succinyl-CoA + ADP + phosphate. The catalysed reaction is GTP + succinate + CoA = succinyl-CoA + GDP + phosphate. Its pathway is carbohydrate metabolism; tricarboxylic acid cycle; succinate from succinyl-CoA (ligase route): step 1/1. Its function is as follows. Succinyl-CoA synthetase functions in the citric acid cycle (TCA), coupling the hydrolysis of succinyl-CoA to the synthesis of either ATP or GTP and thus represents the only step of substrate-level phosphorylation in the TCA. The beta subunit provides nucleotide specificity of the enzyme and binds the substrate succinate, while the binding sites for coenzyme A and phosphate are found in the alpha subunit. This Paraburkholderia phytofirmans (strain DSM 17436 / LMG 22146 / PsJN) (Burkholderia phytofirmans) protein is Succinate--CoA ligase [ADP-forming] subunit beta.